The sequence spans 366 residues: Chorismate synthase (366 aa).

Residue Arg-48 participates in NADP(+) binding. Residues 125 to 127, 238 to 239, Gly-278, 293 to 297, and Arg-319 each bind FMN; these read RSS, NA, and KPTSS.

The protein belongs to the chorismate synthase family. In terms of assembly, homotetramer. FMNH2 is required as a cofactor.

The enzyme catalyses 5-O-(1-carboxyvinyl)-3-phosphoshikimate = chorismate + phosphate. It participates in metabolic intermediate biosynthesis; chorismate biosynthesis; chorismate from D-erythrose 4-phosphate and phosphoenolpyruvate: step 7/7. In terms of biological role, catalyzes the anti-1,4-elimination of the C-3 phosphate and the C-6 proR hydrogen from 5-enolpyruvylshikimate-3-phosphate (EPSP) to yield chorismate, which is the branch point compound that serves as the starting substrate for the three terminal pathways of aromatic amino acid biosynthesis. This reaction introduces a second double bond into the aromatic ring system. In Alkalilimnicola ehrlichii (strain ATCC BAA-1101 / DSM 17681 / MLHE-1), this protein is Chorismate synthase.